The sequence spans 163 residues: Nucleotide-binding protein BA_1166 (163 aa).

This sequence belongs to the YajQ family.

Functionally, nucleotide-binding protein. The protein is Nucleotide-binding protein BA_1166 of Bacillus anthracis.